A 140-amino-acid chain; its full sequence is Small ribosomal subunit protein bS6 (140 aa).

A disordered region spans residues 96-140 (VTGQSEMLKAEENRSERRERRERPENAESNDGDDSDSNDSDNADE). Positions 103–121 (LKAEENRSERRERRERPEN) are enriched in basic and acidic residues. Acidic residues predominate over residues 123-140 (ESNDGDDSDSNDSDNADE).

The protein belongs to the bacterial ribosomal protein bS6 family.

Binds together with bS18 to 16S ribosomal RNA. The polypeptide is Small ribosomal subunit protein bS6 (Ectopseudomonas mendocina (strain ymp) (Pseudomonas mendocina)).